The primary structure comprises 151 residues: Large ribosomal subunit protein bL9 (151 aa).

This sequence belongs to the bacterial ribosomal protein bL9 family.

In terms of biological role, binds to the 23S rRNA. This is Large ribosomal subunit protein bL9 from Nitrosospira multiformis (strain ATCC 25196 / NCIMB 11849 / C 71).